Here is a 229-residue protein sequence, read N- to C-terminus: UPF0173 metal-dependent hydrolase SSP1060 (229 aa).

This sequence belongs to the UPF0173 family.

The sequence is that of UPF0173 metal-dependent hydrolase SSP1060 from Staphylococcus saprophyticus subsp. saprophyticus (strain ATCC 15305 / DSM 20229 / NCIMB 8711 / NCTC 7292 / S-41).